Here is a 722-residue protein sequence, read N- to C-terminus: uncharacterized protein (722 aa).

This is an uncharacterized protein from Treponema pallidum (strain Nichols).